The primary structure comprises 943 residues: Translation initiation factor IF-2 (943 aa).

Disordered stretches follow at residues 96–229 (FIKR…ERRR) and 243–352 (AAPK…QRQQ). The span at 104–116 (DAPSDAAESAPSA) shows a compositional bias: low complexity. 2 stretches are compositionally biased toward basic and acidic residues: residues 120–163 (ELVR…EERA) and 171–229 (AEKK…ERRR). Over residues 278–293 (ATGSGTGARAAAPSAP) the composition is skewed to low complexity. The segment covering 313–323 (TTKKKEIKTRG) has biased composition (basic and acidic residues). The tr-type G domain maps to 443–612 (SRAPVVTVMG…LLQAEVLELK (170 aa)). A G1 region spans residues 452–459 (GHVDHGKT). Position 452 to 459 (452 to 459 (GHVDHGKT)) interacts with GTP. A G2 region spans residues 477–481 (GITQH). Positions 498 to 501 (DTPG) are G3. GTP contacts are provided by residues 498-502 (DTPGH) and 552-555 (TKAD). Positions 552-555 (TKAD) are G4. The G5 stretch occupies residues 588-590 (SSK).

Belongs to the TRAFAC class translation factor GTPase superfamily. Classic translation factor GTPase family. IF-2 subfamily.

It is found in the cytoplasm. One of the essential components for the initiation of protein synthesis. Protects formylmethionyl-tRNA from spontaneous hydrolysis and promotes its binding to the 30S ribosomal subunits. Also involved in the hydrolysis of GTP during the formation of the 70S ribosomal complex. The polypeptide is Translation initiation factor IF-2 (Acidovorax sp. (strain JS42)).